A 167-amino-acid polypeptide reads, in one-letter code: Ubiquitin-fold modifier-conjugating enzyme 1 (167 aa).

Residue cysteine 116 is the Glycyl thioester intermediate of the active site. Lysine 122 participates in a covalent cross-link: Glycyl lysine isopeptide (Lys-Gly) (interchain with G-Cter in UFM1).

The protein belongs to the ubiquitin-conjugating enzyme family. UFC1 subfamily. As to quaternary structure, interacts with UBA5 (via C-terminus). Interacts with UFL1. Interacts with UFM1. Interacts with KIRREL3. Post-translationally, ufmylated at Lys-122. Deufmylated by UFSP1.

Functionally, E2-like enzyme which specifically catalyzes the second step in ufmylation. Accepts the ubiquitin-like modifier UFM1 from the E1 enzyme UBA5 and forms an intermediate with UFM1 via a thioester linkage. Ufmylation is involved in various processes, such as ribosome recycling, response to DNA damage, interferon response or reticulophagy (also called ER-phagy). The chain is Ubiquitin-fold modifier-conjugating enzyme 1 from Mus musculus (Mouse).